Here is a 346-residue protein sequence, read N- to C-terminus: GTPase Obg (346 aa).

The 158-residue stretch at 1-158 (MFIDKAKIYV…RWIELELKLL (158 aa)) folds into the Obg domain. In terms of domain architecture, OBG-type G spans 159-330 (ADVGIIGFPN…LINLIRETRD (172 aa)). Residues 165-172 (GFPNAGKS), 190-194 (FTTLT), 212-215 (DIPG), 282-285 (NKID), and 311-313 (SLI) each bind GTP. Mg(2+)-binding residues include serine 172 and threonine 192.

This sequence belongs to the TRAFAC class OBG-HflX-like GTPase superfamily. OBG GTPase family. As to quaternary structure, monomer. Mg(2+) serves as cofactor.

Its subcellular location is the cytoplasm. Its function is as follows. An essential GTPase which binds GTP, GDP and possibly (p)ppGpp with moderate affinity, with high nucleotide exchange rates and a fairly low GTP hydrolysis rate. Plays a role in control of the cell cycle, stress response, ribosome biogenesis and in those bacteria that undergo differentiation, in morphogenesis control. In Sulfurihydrogenibium sp. (strain YO3AOP1), this protein is GTPase Obg.